The sequence spans 344 residues: Heptahelical transmembrane protein 3 (344 aa).

Topologically, residues 1 to 76 (MKRRRSAKKS…AFSWHNETLN (76 aa)) are cytoplasmic. A helical transmembrane segment spans residues 77-97 (IWTHLIGFGIFLWMTVVSCLE). At 98-147 (TTEISLAGVFNGMAGVRICLSSNQTLLHDSNVTHHISCLTSQGEAIPKWP) the chain is on the extracellular side. The chain crosses the membrane as a helical span at residues 148–168 (WLVYLVGAMGCLICSSVSHLL). The Cytoplasmic segment spans residues 169–184 (ACHSKRFNVFFWRLDY). A helical transmembrane segment spans residues 185–205 (AGISLMIVASFFAPIYYAFSC). Over 206–210 (HPNFR) the chain is Extracellular. The helical transmembrane segment at 211-231 (LLYLSSISILGLLAIITLLSP) threads the bilayer. The Cytoplasmic segment spans residues 232-244 (ALSTPRFRPFRAN). A helical transmembrane segment spans residues 245 to 265 (LFLAMGSSAVIPATHVLCLYW). The Extracellular segment spans residues 266–269 (DHPN). A helical membrane pass occupies residues 270 to 290 (VFIALGYEIATALSYFVGATF). Residues 291-312 (YVSRVPERWKPGAFDMAGHSHQ) lie on the Cytoplasmic side of the membrane. Residues 313-333 (IFHVFVVMGALAHCVTTLLII) form a helical membrane-spanning segment. Topologically, residues 334–344 (DFSRASPSCGF) are extracellular.

This sequence belongs to the ADIPOR family. As to expression, expressed in roots and flowers.

It is found in the membrane. Its function is as follows. May play a role in abiotic stress response. The chain is Heptahelical transmembrane protein 3 (HHP3) from Arabidopsis thaliana (Mouse-ear cress).